The chain runs to 342 residues: N-acetyl-gamma-glutamyl-phosphate reductase (342 aa).

Cys-147 is a catalytic residue.

This sequence belongs to the NAGSA dehydrogenase family. Type 1 subfamily.

The protein resides in the cytoplasm. The catalysed reaction is N-acetyl-L-glutamate 5-semialdehyde + phosphate + NADP(+) = N-acetyl-L-glutamyl 5-phosphate + NADPH + H(+). The protein operates within amino-acid biosynthesis; L-arginine biosynthesis; N(2)-acetyl-L-ornithine from L-glutamate: step 3/4. Catalyzes the NADPH-dependent reduction of N-acetyl-5-glutamyl phosphate to yield N-acetyl-L-glutamate 5-semialdehyde. This Methanosphaera stadtmanae (strain ATCC 43021 / DSM 3091 / JCM 11832 / MCB-3) protein is N-acetyl-gamma-glutamyl-phosphate reductase.